The following is a 269-amino-acid chain: 4-hydroxy-tetrahydrodipicolinate reductase (269 aa).

Residues 9 to 14 (GAGGRM) and E35 each bind NAD(+). NADP(+) is bound at residue R36. NAD(+) contacts are provided by residues 98–100 (GTT) and 122–125 (ASNY). H155 acts as the Proton donor/acceptor in catalysis. H156 contacts (S)-2,3,4,5-tetrahydrodipicolinate. K159 acts as the Proton donor in catalysis. (S)-2,3,4,5-tetrahydrodipicolinate is bound at residue 165–166 (GT).

The protein belongs to the DapB family.

The protein resides in the cytoplasm. It catalyses the reaction (S)-2,3,4,5-tetrahydrodipicolinate + NAD(+) + H2O = (2S,4S)-4-hydroxy-2,3,4,5-tetrahydrodipicolinate + NADH + H(+). It carries out the reaction (S)-2,3,4,5-tetrahydrodipicolinate + NADP(+) + H2O = (2S,4S)-4-hydroxy-2,3,4,5-tetrahydrodipicolinate + NADPH + H(+). The protein operates within amino-acid biosynthesis; L-lysine biosynthesis via DAP pathway; (S)-tetrahydrodipicolinate from L-aspartate: step 4/4. Its function is as follows. Catalyzes the conversion of 4-hydroxy-tetrahydrodipicolinate (HTPA) to tetrahydrodipicolinate. In Actinobacillus pleuropneumoniae serotype 7 (strain AP76), this protein is 4-hydroxy-tetrahydrodipicolinate reductase.